We begin with the raw amino-acid sequence, 607 residues long: MNNEERLERQKNIRNFSIIAHIDHGKSTLADRILENTKSVETRDMQAQLLDSMDLERERGITIKLNAVKLKYEAKNGESYIFHLIDTPGHVDFSYEVSRSLAACEGAILVVDAAQGIEAQTLANVYLALDNDLELLPVVNKIDLPAAEPERVKQELEDVIGIDQDDVVLASAKSNIGIDEILEKIVETIPAPSGDPSAPLKALIFDSEYDPYRGVISSIRIVDGVVKAGDKIKMMASGKEFEVTEVGINTPKQLPVDELTVGDVGYITASIKNVDDSRVGDTITHADQPAEQPLKGYKKMNPMVYCGLFPIDNKKYNDLREALEKLQLNDASLEFEPETSQALGFGFRTGFLGMLHMEIIQERIEREFGIELIATAPSVIYECILKNGDKVIVDNPSKMPERDQIEEIYEPYVRATIMVPNDYVGAVMELCQRKRGQFINMDYLDDIRVNIIYDIPLSEVVFDFFDQIKSNTKGYASFDYELTGYKESNLVKMDILLNGDKVDALSFIVHKEFAYERGKALVERLKTLIPRQQFEVPVQAAVGQKIVARTNIKSMGKNVLSKCYGGDISRKRKLLEKQKAGKAKMKAVGNVEIPQDAFLAVLKMDED.

A tr-type G domain is found at 11-193 (KNIRNFSIIA…KIVETIPAPS (183 aa)). Residues 23 to 28 (DHGKST) and 140 to 143 (NKID) each bind GTP.

This sequence belongs to the TRAFAC class translation factor GTPase superfamily. Classic translation factor GTPase family. LepA subfamily.

It is found in the cell membrane. It carries out the reaction GTP + H2O = GDP + phosphate + H(+). In terms of biological role, required for accurate and efficient protein synthesis under certain stress conditions. May act as a fidelity factor of the translation reaction, by catalyzing a one-codon backward translocation of tRNAs on improperly translocated ribosomes. Back-translocation proceeds from a post-translocation (POST) complex to a pre-translocation (PRE) complex, thus giving elongation factor G a second chance to translocate the tRNAs correctly. Binds to ribosomes in a GTP-dependent manner. The chain is Elongation factor 4 from Staphylococcus carnosus (strain TM300).